The primary structure comprises 948 residues: MAQQYQPGQRWISDSEAELGLGTVLAQDGRLLTVLYPATGETRQYALRNAPLTRVRFSPGDVITHFENWKMTVREVDDVDGLLVYHGLNAQNEVVTLPETQLSNFIQFRLATDRLFAGQIDQLSWFSLRYNTLEHTSRQLQSSLWGLGGVRAQPIAHQLHIAREVADRIAPRVLLADEVGLGKTIEAGLVIHRQLLSGRANRVLILVPENLQHQWLVEMRRRFNLQVALFDAERFMESDAGNPFEDTQLALVALEWLVEDEKAQDALFAAGWDLMVVDEAHHLVWHEEKASREYSLVEQLAEVIAGVLLLTATPEQLGQDSHFARLRLLDPNRFHDLKAFRAESENYRPVAQAVQELLDKGKLSAAAQKTIHGFLGAEGDTLLAAVNAGDDEAKARLIRELLDRHGTGRVLFRNTRAAVQGFPERKLHQYPLPCPVEYLELPVGEHADLYPEVSFQSQSDASEEERWWRFDPRVEWLIDTLKMLKRVKVLVICAHAETAMDLEDALRVRSGIPATVFHEGMNILERDRAAAYFADEEFGAQVLICSEIGSEGRNFQFSHHLVLFDLPSHPDLLEQRIGRLDRIGQKHVIELHVPFLETSPQARLFQWYHEALNAFLNTCPTGNALQHQFGPRLLPLLESGDDDEWQSLIDEARSERERLESELHTGRDRLLELNSGGAGEGEALVEDILEQDDQFSLPIYMETLFDAFGIDSEDHSENALILKPSEKMLDASFPLGDDEGVTITYDRNQALSREDMQFITWEHPMVQGGMDLVLSGSMGNTAVALIKNKALKPGTVLLELIYVSEVVAPRSLQLGRYLPPAALRCLLDANGNDLSSRVSFNTLNDQLESVPRASANKFIQAQRDQLTPRINAGEEKITPKHAERVAEAQRRLAADTEEELARLTALQAVNPTVRDSELVALRTQREQGLAMLEKAALRLEAIRVLVAG.

Residues 164–332 form the Helicase ATP-binding domain; that stretch reads EVADRIAPRV…FARLRLLDPN (169 aa). 177 to 184 is an ATP binding site; the sequence is DEVGLGKT. The DEAH box signature appears at 278–281; the sequence is DEAH. Residues 473–627 form the Helicase C-terminal domain; sequence RVEWLIDTLK…TCPTGNALQH (155 aa).

Belongs to the SNF2/RAD54 helicase family. RapA subfamily. In terms of assembly, interacts with the RNAP. Has a higher affinity for the core RNAP than for the holoenzyme. Its ATPase activity is stimulated by binding to RNAP.

In terms of biological role, transcription regulator that activates transcription by stimulating RNA polymerase (RNAP) recycling in case of stress conditions such as supercoiled DNA or high salt concentrations. Probably acts by releasing the RNAP, when it is trapped or immobilized on tightly supercoiled DNA. Does not activate transcription on linear DNA. Probably not involved in DNA repair. The sequence is that of RNA polymerase-associated protein RapA from Pseudomonas syringae pv. tomato (strain ATCC BAA-871 / DC3000).